Consider the following 175-residue polypeptide: Transcription factor HES-3 (175 aa).

A bHLH domain is found at 1–49 (MEKKRRARINVSLEQLRSLLERHYSHQIRKRKLEKADILELSVKYMRSL). The 34-residue stretch at 65 to 98 (YPSGFQGGLRGVSQRLRPGEGDSGLRCPLLLQRR) folds into the Orange domain. The segment at 126–166 (RAAGGSHSPQSPLPLPGGLLESSTDVVAPHPASNCQAESTR) is disordered. Residues 129–148 (GGSHSPQSPLPLPGGLLESS) show a composition bias toward low complexity. A WRPW motif motif is present at residues 172-175 (WRPW).

Transcription repression requires formation of a complex with a corepressor protein of the Groucho/TLE family.

The protein resides in the nucleus. In terms of biological role, transcriptional repressor of genes that require a bHLH protein for their transcription. This Mus musculus (Mouse) protein is Transcription factor HES-3 (Hes3).